The sequence spans 188 residues: Transmembrane protein 160 (188 aa).

The transit peptide at 1-96 (MGGGWWWARV…ISFMQSDMGR (96 aa)) directs the protein to the mitochondrion. The interval 21–53 (SLQPPQRPRSGGARGSFAPGHGPRAGASPPPVS) is disordered. The residue at position 48 (Ser48) is a Phosphoserine. Helical transmembrane passes span 102 to 122 (FFLL…VGLA) and 135 to 155 (AAAG…AVGL). Residues 168 to 188 (PEDDGAASTEGPDEAGRPPPE) form a disordered region.

It belongs to the TMEM160 family. In terms of tissue distribution, expressed in peripheral sensory neurons of dorsal root ganglia (DRG).

It localises to the mitochondrion inner membrane. This is Transmembrane protein 160 from Mus musculus (Mouse).